The primary structure comprises 301 residues: tRNA pseudouridine synthase B (301 aa).

Asp45 serves as the catalytic Nucleophile.

Belongs to the pseudouridine synthase TruB family. Type 1 subfamily.

It catalyses the reaction uridine(55) in tRNA = pseudouridine(55) in tRNA. Its function is as follows. Responsible for synthesis of pseudouridine from uracil-55 in the psi GC loop of transfer RNAs. This chain is tRNA pseudouridine synthase B, found in Streptomyces avermitilis (strain ATCC 31267 / DSM 46492 / JCM 5070 / NBRC 14893 / NCIMB 12804 / NRRL 8165 / MA-4680).